The chain runs to 366 residues: Capsular polysaccharide phosphotransferase LcbA (366 aa).

The protein belongs to the stealth family.

This chain is Capsular polysaccharide phosphotransferase LcbA (lcbA), found in Neisseria meningitidis.